A 90-amino-acid chain; its full sequence is U7-theraphotoxin-Hhn1k (90 aa).

Positions 1 to 19 (MKTAIFTVVLALAVFAVLS) are cleaved as a signal peptide. A propeptide spanning residues 20-50 (FGWEANEKALSEEFTELIHEKEAASETEARE) is cleaved from the precursor. Cystine bridges form between C51–C65 and C58–C70.

It belongs to the neurotoxin 10 (Hwtx-1) family. 13 (Hntx-13) subfamily. In terms of tissue distribution, expressed by the venom gland.

It localises to the secreted. Ion channel inhibitor. The protein is U7-theraphotoxin-Hhn1k of Cyriopagopus hainanus (Chinese bird spider).